The following is a 471-amino-acid chain: Heat shock 70 kDa protein 13 (471 aa).

The N-terminal stretch at 1–22 is a signal peptide; that stretch reads MAGEMTILGSAVLTLLLAGYLA. The interval 315–337 is disordered; the sequence is ENDRKGPPTSDSELPKDKFSQAN.

The protein belongs to the heat shock protein 70 family. Binds UBQLN2.

Its subcellular location is the microsome. It localises to the endoplasmic reticulum. Has peptide-independent ATPase activity. The polypeptide is Heat shock 70 kDa protein 13 (HSPA13) (Bos taurus (Bovine)).